Reading from the N-terminus, the 490-residue chain is ATP synthase subunit beta, chloroplastic (490 aa).

A Phosphothreonine modification is found at Thr6. Ser13 bears the Phosphoserine mark. An ATP-binding site is contributed by 172 to 179 (GGAGVGKT).

It belongs to the ATPase alpha/beta chains family. F-type ATPases have 2 components, CF(1) - the catalytic core - and CF(0) - the membrane proton channel. CF(1) has five subunits: alpha(3), beta(3), gamma(1), delta(1), epsilon(1). CF(0) has four main subunits: a(1), b(1), b'(1) and c(9-12).

The protein resides in the plastid. The protein localises to the chloroplast thylakoid membrane. It catalyses the reaction ATP + H2O + 4 H(+)(in) = ADP + phosphate + 5 H(+)(out). In terms of biological role, produces ATP from ADP in the presence of a proton gradient across the membrane. The catalytic sites are hosted primarily by the beta subunits. The polypeptide is ATP synthase subunit beta, chloroplastic (Aethionema cordifolium (Lebanon stonecress)).